The primary structure comprises 46 residues: Toxin PhcrTx2 (46 aa).

Cystine bridges form between Cys4-Cys40, Cys6-Cys32, and Cys22-Cys41.

It belongs to the sea anemone type 3 (BDS) potassium channel toxin family.

The protein resides in the secreted. The protein localises to the nematocyst. Functionally, neurotoxin that induces paralysis (but not death) to U.thayeri crabs. Partially and reversibly inhibits glutamate-evoked peak currents (IC(50)=4.7 uM) but not voltage-gated potassium channel currents in cultured isolated neurons from the land snail H.aspersa. Weakly inhibits voltage-gated potassium peak currents (IC(50)=6.4 uM) and steady-state currents (IC(50)=8.2 uM) in rat dorsal root ganglion (DRG) neurons. Weakly inhibits voltage-gated sodium currents in rat DRG neurons (IC(50)=0.9 uM). The protein is Toxin PhcrTx2 of Phymanthus crucifer (Red beaded anemone).